Reading from the N-terminus, the 308-residue chain is Porphobilinogen deaminase (308 aa).

Cys-241 carries the post-translational modification S-(dipyrrolylmethanemethyl)cysteine.

This sequence belongs to the HMBS family. In terms of assembly, monomer. Dipyrromethane serves as cofactor.

It catalyses the reaction 4 porphobilinogen + H2O = hydroxymethylbilane + 4 NH4(+). It participates in porphyrin-containing compound metabolism; protoporphyrin-IX biosynthesis; coproporphyrinogen-III from 5-aminolevulinate: step 2/4. In terms of biological role, tetrapolymerization of the monopyrrole PBG into the hydroxymethylbilane pre-uroporphyrinogen in several discrete steps. The sequence is that of Porphobilinogen deaminase from Staphylococcus aureus (strain MSSA476).